Here is a 224-residue protein sequence, read N- to C-terminus: Transcriptional regulatory protein TctD (224 aa).

The region spanning 2-116 (RLLLAEDNRE…ELDARLRALL (115 aa)) is the Response regulatory domain. Asp51 carries the 4-aspartylphosphate modification. A DNA-binding region (ompR/PhoB-type) is located at residues 121–219 (GQVHEVQQLG…LRGLGYVLER (99 aa)).

Transcriptional activator of the tctI tricarboxylate transport system operon. The chain is Transcriptional regulatory protein TctD (tctD) from Salmonella typhimurium (strain SL1344).